The primary structure comprises 182 residues: Capsid protein (182 aa).

The segment at 136 to 182 is disordered; sequence NAPILSTLPETTVVRRRRPSGRRTPSPRRRRSQSPRRRRSQSPASSC. Positions 149–175 are enriched in basic residues; that stretch reads VRRRRPSGRRTPSPRRRRSQSPRRRRS. The Bipartite nuclear localization signal motif lies at 157–174; sequence RRTPSPRRRRSQSPRRRR. Phosphoserine; by host occurs at positions 161 and 169. Repeat copies occupy residues 161–168 and 169–176. The tract at residues 161–176 is 2 X 8 AA repeats of S-P-R-R-R-[PR]-S-Q; that stretch reads SPRRRRSQSPRRRRSQ. The tract at residues 176–182 is RNA binding; it reads QSPASSC.

Belongs to the orthohepadnavirus core antigen family. In terms of assembly, homodimerizes, then multimerizes. Interacts with cytosol exposed regions of viral L glycoprotein present in the reticulum-to-Golgi compartment. Interacts with human FLNB. Phosphorylated form interacts with host importin alpha; this interaction depends on the exposure of the NLS, which itself depends upon genome maturation and/or phosphorylation of the capsid protein. Interacts with host NUP153. Phosphorylated by host SRPK1, SRPK2, and maybe protein kinase C or GAPDH. Phosphorylation is critical for pregenomic RNA packaging. Protein kinase C phosphorylation is stimulated by HBx protein and may play a role in transport of the viral genome to the nucleus at the late step during the viral replication cycle.

The protein localises to the virion. The protein resides in the host cytoplasm. Functionally, self assembles to form an icosahedral capsid. Most capsids appear to be large particles with an icosahedral symmetry of T=4 and consist of 240 copies of capsid protein, though a fraction forms smaller T=3 particles consisting of 180 capsid proteins. Entering capsids are transported along microtubules to the nucleus. Phosphorylation of the capsid is thought to induce exposure of nuclear localization signal in the C-terminal portion of the capsid protein that allows binding to the nuclear pore complex via the importin (karyopherin-) alpha and beta. Capsids are imported in intact form through the nuclear pore into the nuclear basket, where it probably binds NUP153. Only capsids that contain the mature viral genome can release the viral DNA and capsid protein into the nucleoplasm. Immature capsids get stuck in the basket. Capsids encapsulate the pre-genomic RNA and the P protein. Pre-genomic RNA is reverse-transcribed into DNA while the capsid is still in the cytoplasm. The capsid can then either be directed to the nucleus, providing more genomes for transcription, or bud through the endoplasmic reticulum to provide new virions. The polypeptide is Capsid protein (Woolly monkey hepatitis B virus (isolate Louisville) (WMHBV)).